The chain runs to 537 residues: Protein ST7 homolog (537 aa).

Residues 15–35 form a helical membrane-spanning segment; sequence FYVALTGTSSLISGLILIFEW. The interval 61-111 is disordered; that stretch reads SDGQSESSNGSGSSSSSGSSSSSNGGAGGGGSGGAGASGSGSATTSTGTQM. Over residues 67-84 the composition is skewed to low complexity; that stretch reads SSNGSGSSSSSGSSSSSN. Over residues 85 to 99 the composition is skewed to gly residues; the sequence is GGAGGGGSGGAGASG. Residues 100–109 show a composition bias toward low complexity; it reads SGSATTSTGT. The helical transmembrane segment at 472–492 threads the bilayer; sequence LPFFILFTAGLCSITALLALA.

It belongs to the ST7 family.

Its subcellular location is the membrane. This chain is Protein ST7 homolog, found in Drosophila melanogaster (Fruit fly).